Consider the following 245-residue polypeptide: 8-amino-3,8-dideoxy-manno-octulosonate cytidylyltransferase (245 aa).

The protein belongs to the KdsB family.

The protein localises to the cytoplasm. The enzyme catalyses 8-amino-3,8-dideoxy-alpha-D-manno-octulosonate + CTP = CMP-8-amino-3,8-dideoxy-alpha-D-manno-oct-2-ulosonate + diphosphate. It functions in the pathway bacterial outer membrane biogenesis; lipopolysaccharide biosynthesis. In terms of biological role, activates KDO8N (a required 8-carbon sugar) for incorporation into bacterial lipopolysaccharide in the Shewanella genus. The protein is 8-amino-3,8-dideoxy-manno-octulosonate cytidylyltransferase of Shewanella sp. (strain MR-7).